The primary structure comprises 872 residues: C-mannosyltransferase dpy-19 homolog (872 aa).

A run of 9 helical transmembrane segments spans residues 4–24 (PNLY…FLYV), 126–146 (FVWL…TLLS), 149–169 (IFGG…VAKI), 179–199 (FAFP…GRII), 211–231 (IFAM…STFI), 257–277 (VLDY…MSHG), 279–299 (SQLL…ITMV), 326–346 (FLML…ELFN), and 399–419 (VKTM…AMFF). Residues 508–535 (KRLRAQINRNSVKQRKERAQETKEAATD) adopt a coiled-coil conformation. The disordered stretch occupies residues 514-620 (INRNSVKQRK…RSSSRRSSVV (107 aa)). A compositionally biased stretch (basic and acidic residues) spans 524-533 (ERAQETKEAA). Residues 541–551 (TEEEDKDPEAE) show a composition bias toward acidic residues. Transmembrane regions (helical) follow at residues 627–647 (ILNM…LIGL) and 678–698 (NIFW…PGMV).

This sequence belongs to the dpy-19 family.

The protein resides in the membrane. Functionally, probable C-mannosyltransferase that mediates C-mannosylation of tryptophan residues on target proteins. The chain is C-mannosyltransferase dpy-19 homolog from Drosophila melanogaster (Fruit fly).